Consider the following 390-residue polypeptide: Queuine tRNA-ribosyltransferase (390 aa).

Aspartate 92 serves as the catalytic Proton acceptor. Residues 92–96 (DSGGF), aspartate 146, glutamine 195, and glycine 222 contribute to the substrate site. Residues 253-259 (GVGTPED) form an RNA binding region. Aspartate 272 functions as the Nucleophile in the catalytic mechanism. The RNA binding; important for wobble base 34 recognition stretch occupies residues 277 to 281 (TRNAR). Zn(2+)-binding residues include cysteine 310, cysteine 312, cysteine 315, and histidine 354.

This sequence belongs to the queuine tRNA-ribosyltransferase family. Homodimer. Within each dimer, one monomer is responsible for RNA recognition and catalysis, while the other monomer binds to the replacement base PreQ1. It depends on Zn(2+) as a cofactor.

The enzyme catalyses 7-aminomethyl-7-carbaguanine + guanosine(34) in tRNA = 7-aminomethyl-7-carbaguanosine(34) in tRNA + guanine. The protein operates within tRNA modification; tRNA-queuosine biosynthesis. Functionally, catalyzes the base-exchange of a guanine (G) residue with the queuine precursor 7-aminomethyl-7-deazaguanine (PreQ1) at position 34 (anticodon wobble position) in tRNAs with GU(N) anticodons (tRNA-Asp, -Asn, -His and -Tyr). Catalysis occurs through a double-displacement mechanism. The nucleophile active site attacks the C1' of nucleotide 34 to detach the guanine base from the RNA, forming a covalent enzyme-RNA intermediate. The proton acceptor active site deprotonates the incoming PreQ1, allowing a nucleophilic attack on the C1' of the ribose to form the product. After dissociation, two additional enzymatic reactions on the tRNA convert PreQ1 to queuine (Q), resulting in the hypermodified nucleoside queuosine (7-(((4,5-cis-dihydroxy-2-cyclopenten-1-yl)amino)methyl)-7-deazaguanosine). In Verminephrobacter eiseniae (strain EF01-2), this protein is Queuine tRNA-ribosyltransferase.